The chain runs to 123 residues: Small ribosomal subunit protein uS13c (123 aa).

Residues 90–123 (GKRHRNSLPVRGQRTRTNARSRRGAKKTVTGKKK) are disordered. Basic residues predominate over residues 102–123 (QRTRTNARSRRGAKKTVTGKKK).

It belongs to the universal ribosomal protein uS13 family. Part of the 30S ribosomal subunit.

It is found in the plastid. Its subcellular location is the chloroplast. Located at the top of the head of the 30S subunit, it contacts several helices of the 16S rRNA. This Thalassiosira pseudonana (Marine diatom) protein is Small ribosomal subunit protein uS13c.